Here is a 346-residue protein sequence, read N- to C-terminus: Nicotinate-nucleotide--dimethylbenzimidazole phosphoribosyltransferase (346 aa).

Catalysis depends on Glu312, which acts as the Proton acceptor.

Belongs to the CobT family.

The catalysed reaction is 5,6-dimethylbenzimidazole + nicotinate beta-D-ribonucleotide = alpha-ribazole 5'-phosphate + nicotinate + H(+). It participates in nucleoside biosynthesis; alpha-ribazole biosynthesis; alpha-ribazole from 5,6-dimethylbenzimidazole: step 1/2. Its function is as follows. Catalyzes the synthesis of alpha-ribazole-5'-phosphate from nicotinate mononucleotide (NAMN) and 5,6-dimethylbenzimidazole (DMB). In Cupriavidus taiwanensis (strain DSM 17343 / BCRC 17206 / CCUG 44338 / CIP 107171 / LMG 19424 / R1) (Ralstonia taiwanensis (strain LMG 19424)), this protein is Nicotinate-nucleotide--dimethylbenzimidazole phosphoribosyltransferase.